We begin with the raw amino-acid sequence, 340 residues long: MNAPRTPKPARKKPDSATPAKPVEPRKEASLHPRNRHQGRYDFPALIKTTPELAKFVITNPYGKESIDFASPDAVRVFNRALLKSFYGIQHWDIPADYLCPPVPGRADYIHFLADLLASNNDGVVPRGAIVNVLDIGMGANCVYPLIGNSEYRWHFLGSEIDPTAVAAARAIVQSNDLNKVIQLRQQENRKHILIGLLEPGERFDLTMCNPPFHASMEEATKGSERKWRALGKADPKRKLPVLNFGGQSAELWCEGGEARFVTQLIAESANFAHKVLWFSTLVSKASNLPAIETALKKAGALESQVVEMSQGQKQSRFVAWTFQTKSEQQIWRRERWVRK.

Residues 1 to 36 (MNAPRTPKPARKKPDSATPAKPVEPRKEASLHPRNR) are disordered.

The protein belongs to the methyltransferase superfamily. METTL16/RlmF family.

The protein localises to the cytoplasm. The catalysed reaction is adenosine(1618) in 23S rRNA + S-adenosyl-L-methionine = N(6)-methyladenosine(1618) in 23S rRNA + S-adenosyl-L-homocysteine + H(+). In terms of biological role, specifically methylates the adenine in position 1618 of 23S rRNA. This chain is Ribosomal RNA large subunit methyltransferase F, found in Pseudomonas fluorescens (strain Pf0-1).